Consider the following 397-residue polypeptide: Protein ROH1D (397 aa).

A helical membrane pass occupies residues 247-267; sequence LIVPVYTMTTVLLFVMWALVA.

Belongs to the ROH1 family. In terms of assembly, interacts with EXO70C2. As to expression, mostly expressed in mature pollen.

The protein resides in the membrane. The protein localises to the cytoplasm. Its subcellular location is the cytosol. Functionally, involved in the regulation of plant growth, and modulates pollen development to ensure male fertility. May also affect the composition of the inner seed coat mucilage layer. This is Protein ROH1D from Arabidopsis thaliana (Mouse-ear cress).